The chain runs to 565 residues: Tyrosine-protein phosphatase non-receptor type 5 (565 aa).

Over residues 1 to 16 the composition is skewed to basic and acidic residues; that stretch reads MNYEGARSERENHAAD. Residues 1 to 80 are disordered; that stretch reads MNYEGARSER…KPPPRGAGSH (80 aa). Residues 56-75 are compositionally biased toward pro residues; sequence MPPPPPPSPPSDPAQKPPPR. A run of 2 helical transmembrane segments spans residues 88–108 and 146–166; these read LCLF…FSGY and LLLV…WHLL. Residues 169 to 189 are disordered; it reads PPEPPTPLPPEDRRQSVSRQP. Position 245 is a phosphoserine; by PKA (Ser245). Phosphothreonine; by MAPK is present on Thr255. Ser268 carries the phosphoserine; by MAPK modification. One can recognise a Tyrosine-protein phosphatase domain in the interval 300–555; the sequence is LQAEFFEIPM…QFVHHVMSLY (256 aa). Substrate is bound by residues Asp461, 496–502, and Gln540; that span reads CSAGIGR. Cys496 (phosphocysteine intermediate) is an active-site residue.

Belongs to the protein-tyrosine phosphatase family. Non-receptor class subfamily. Phosphorylation at Ser-245 by PKA deactivates PTPN5. Phosphorylation at Thr-255 and Ser-268 by MAPKs stabilizes the phosphatase, dephosphorylation of these sites results in ubiquitin-mediated degradation of the active phosphatase.

It localises to the endoplasmic reticulum membrane. It catalyses the reaction O-phospho-L-tyrosyl-[protein] + H2O = L-tyrosyl-[protein] + phosphate. In terms of biological role, may regulate the activity of several effector molecules involved in synaptic plasticity and neuronal cell survival, including MAPKs, Src family kinases and NMDA receptors. This Homo sapiens (Human) protein is Tyrosine-protein phosphatase non-receptor type 5 (PTPN5).